The chain runs to 387 residues: Anhydro-N-acetylmuramic acid kinase (387 aa).

An ATP-binding site is contributed by 9-16; that stretch reads GTSADGVD.

It belongs to the anhydro-N-acetylmuramic acid kinase family.

It catalyses the reaction 1,6-anhydro-N-acetyl-beta-muramate + ATP + H2O = N-acetyl-D-muramate 6-phosphate + ADP + H(+). Its pathway is amino-sugar metabolism; 1,6-anhydro-N-acetylmuramate degradation. It functions in the pathway cell wall biogenesis; peptidoglycan recycling. Functionally, catalyzes the specific phosphorylation of 1,6-anhydro-N-acetylmuramic acid (anhMurNAc) with the simultaneous cleavage of the 1,6-anhydro ring, generating MurNAc-6-P. Is required for the utilization of anhMurNAc either imported from the medium or derived from its own cell wall murein, and thus plays a role in cell wall recycling. This chain is Anhydro-N-acetylmuramic acid kinase, found in Synechococcus sp. (strain WH7803).